The primary structure comprises 359 residues: Histidinol-phosphate aminotransferase (359 aa).

Position 217 is an N6-(pyridoxal phosphate)lysine (Lys-217).

The protein belongs to the class-II pyridoxal-phosphate-dependent aminotransferase family. Histidinol-phosphate aminotransferase subfamily. In terms of assembly, homodimer. Pyridoxal 5'-phosphate is required as a cofactor.

The catalysed reaction is L-histidinol phosphate + 2-oxoglutarate = 3-(imidazol-4-yl)-2-oxopropyl phosphate + L-glutamate. It participates in amino-acid biosynthesis; L-histidine biosynthesis; L-histidine from 5-phospho-alpha-D-ribose 1-diphosphate: step 7/9. In Salmonella arizonae (strain ATCC BAA-731 / CDC346-86 / RSK2980), this protein is Histidinol-phosphate aminotransferase.